We begin with the raw amino-acid sequence, 35 residues long: Dermonecrotic toxin LgSicTox-beta-LOXN4 (35 aa).

Asp-20 is a Mg(2+) binding site.

Belongs to the arthropod phospholipase D family. Class II subfamily. Mg(2+) is required as a cofactor. Post-translationally, contains 2 disulfide bonds. Expressed by the venom gland.

It is found in the secreted. It catalyses the reaction an N-(acyl)-sphingosylphosphocholine = an N-(acyl)-sphingosyl-1,3-cyclic phosphate + choline. It carries out the reaction an N-(acyl)-sphingosylphosphoethanolamine = an N-(acyl)-sphingosyl-1,3-cyclic phosphate + ethanolamine. The catalysed reaction is a 1-acyl-sn-glycero-3-phosphocholine = a 1-acyl-sn-glycero-2,3-cyclic phosphate + choline. The enzyme catalyses a 1-acyl-sn-glycero-3-phosphoethanolamine = a 1-acyl-sn-glycero-2,3-cyclic phosphate + ethanolamine. Its function is as follows. Dermonecrotic toxins cleave the phosphodiester linkage between the phosphate and headgroup of certain phospholipids (sphingolipid and lysolipid substrates), forming an alcohol (often choline) and a cyclic phosphate. This toxin acts on sphingomyelin (SM). It may also act on ceramide phosphoethanolamine (CPE), lysophosphatidylcholine (LPC) and lysophosphatidylethanolamine (LPE), but not on lysophosphatidylserine (LPS), and lysophosphatidylglycerol (LPG). It acts by transphosphatidylation, releasing exclusively cyclic phosphate products as second products. Induces dermonecrosis, hemolysis, increased vascular permeability, edema, inflammatory response, and platelet aggregation. The chain is Dermonecrotic toxin LgSicTox-beta-LOXN4 from Loxosceles gaucho (Spider).